We begin with the raw amino-acid sequence, 150 residues long: Small ribosomal subunit protein uS13 (150 aa).

The interval 131–150 is disordered; it reads QRTKSTFRRGPTVGVSRRKK.

It belongs to the universal ribosomal protein uS13 family. As to quaternary structure, part of the 30S ribosomal subunit. Forms a loose heterodimer with protein S19. Forms two bridges to the 50S subunit in the 70S ribosome.

Functionally, located at the top of the head of the 30S subunit, it contacts several helices of the 16S rRNA. In the 70S ribosome it contacts the 23S rRNA (bridge B1a) and protein L5 of the 50S subunit (bridge B1b), connecting the 2 subunits; these bridges are implicated in subunit movement. The protein is Small ribosomal subunit protein uS13 of Methanocaldococcus jannaschii (strain ATCC 43067 / DSM 2661 / JAL-1 / JCM 10045 / NBRC 100440) (Methanococcus jannaschii).